Reading from the N-terminus, the 150-residue chain is Large ribosomal subunit protein uL15 (150 aa).

Residues 1-49 (MELHQLKSVSKSRNHKSKVVGRGHGSGLGKTSSRGQKGQKARKSGLTRL) form a disordered region. The span at 10–21 (SKSRNHKSKVVG) shows a compositional bias: basic residues.

This sequence belongs to the universal ribosomal protein uL15 family. Part of the 50S ribosomal subunit.

Binds to the 23S rRNA. This Mycoplasma genitalium (strain ATCC 33530 / DSM 19775 / NCTC 10195 / G37) (Mycoplasmoides genitalium) protein is Large ribosomal subunit protein uL15.